The primary structure comprises 350 residues: tRNA uridine(34) hydroxylase (350 aa).

Residues 146-240 (DDPDALFIDM…YARKAREQGL (95 aa)) enclose the Rhodanese domain. Cysteine 200 (cysteine persulfide intermediate) is an active-site residue.

It belongs to the TrhO family.

The catalysed reaction is uridine(34) in tRNA + AH2 + O2 = 5-hydroxyuridine(34) in tRNA + A + H2O. In terms of biological role, catalyzes oxygen-dependent 5-hydroxyuridine (ho5U) modification at position 34 in tRNAs. In Shigella flexneri serotype 5b (strain 8401), this protein is tRNA uridine(34) hydroxylase.